A 370-amino-acid polypeptide reads, in one-letter code: Histidinol-phosphate aminotransferase (370 aa).

Residue Lys-220 is modified to N6-(pyridoxal phosphate)lysine.

This sequence belongs to the class-II pyridoxal-phosphate-dependent aminotransferase family. Histidinol-phosphate aminotransferase subfamily. In terms of assembly, homodimer. Requires pyridoxal 5'-phosphate as cofactor.

It carries out the reaction L-histidinol phosphate + 2-oxoglutarate = 3-(imidazol-4-yl)-2-oxopropyl phosphate + L-glutamate. The protein operates within amino-acid biosynthesis; L-histidine biosynthesis; L-histidine from 5-phospho-alpha-D-ribose 1-diphosphate: step 7/9. The sequence is that of Histidinol-phosphate aminotransferase from Granulibacter bethesdensis (strain ATCC BAA-1260 / CGDNIH1).